Consider the following 116-residue polypeptide: Large ribosomal subunit protein eL22A (116 aa).

It belongs to the eukaryotic ribosomal protein eL22 family.

The protein is Large ribosomal subunit protein eL22A (rpl22) of Dictyostelium discoideum (Social amoeba).